The following is a 205-amino-acid chain: Dephospho-CoA kinase (205 aa).

The DPCK domain maps to 15-205 (VIGLTGGIAT…VERALDQASI (191 aa)). 23-28 (ATGKST) lines the ATP pocket.

The protein belongs to the CoaE family.

It is found in the cytoplasm. It catalyses the reaction 3'-dephospho-CoA + ATP = ADP + CoA + H(+). Its pathway is cofactor biosynthesis; coenzyme A biosynthesis; CoA from (R)-pantothenate: step 5/5. Its function is as follows. Catalyzes the phosphorylation of the 3'-hydroxyl group of dephosphocoenzyme A to form coenzyme A. This Gloeobacter violaceus (strain ATCC 29082 / PCC 7421) protein is Dephospho-CoA kinase.